The primary structure comprises 122 residues: Large ribosomal subunit protein bL12 (122 aa).

It belongs to the bacterial ribosomal protein bL12 family. In terms of assembly, homodimer. Part of the ribosomal stalk of the 50S ribosomal subunit. Forms a multimeric L10(L12)X complex, where L10 forms an elongated spine to which 2 to 4 L12 dimers bind in a sequential fashion. Binds GTP-bound translation factors.

Functionally, forms part of the ribosomal stalk which helps the ribosome interact with GTP-bound translation factors. Is thus essential for accurate translation. The protein is Large ribosomal subunit protein bL12 of Shewanella denitrificans (strain OS217 / ATCC BAA-1090 / DSM 15013).